The chain runs to 966 residues: Dynamin-like GTPase OPA1, mitochondrial (966 aa).

The transit peptide at 1-86 directs the protein to the mitochondrion; that stretch reads MLRAGSVVTC…GGHGYQQHRT (86 aa). Residues 87-95 lie on the Mitochondrial matrix side of the membrane; sequence FWVARLAAR. A helical transmembrane segment spans residues 96–112; that stretch reads LLKLRYILLGSAVGGGY. The Mitochondrial intermembrane portion of the chain corresponds to 113–776; it reads TAKKTYDEWK…SVIADMVGPD (664 aa). The tract at residues 189 to 217 is disordered; the sequence is ESALRAPDVPPASAAMADSGDKQFKKSSD. The segment covering 207–217 has biased composition (basic and acidic residues); it reads SGDKQFKKSSD. The stretch at 213-259 forms a coiled coil; it reads KKSSDKEKVDQLQEELLRTQLKYQRMLERLEKENKELRKVVLQKDDK. The Dynamin-type G domain maps to 291–567; that stretch reads QDHLPRVVVV…FWKMVRESVE (277 aa). The segment at 301 to 308 is G1 motif; sequence GDQSAGKT. GTP contacts are provided by S304, G306, K307, T308, S309, and G323. Position 308 (T308) interacts with Mg(2+). The tract at residues 327 to 330 is G2 motif; sequence MMTR. Positions 329 and 404 each coordinate Mg(2+). The segment at 404-407 is G3 motif; the sequence is DLPG. The segment at 473 to 476 is G4 motif; it reads TKVD. GTP contacts are provided by K474, D476, and T509. Residues 507 to 510 form a G5 motif region; sequence VVTG. Stalk region stretches follow at residues 595–842 and 880–934; these read DRNE…IKDT and CNDV…VQLI. The interval 742-862 is paddle region; sequence TDKPQWDAAI…QKALLHCNLC (121 aa). The stretch at 777-787 is an intramembrane region; it reads WKQRWMSWKNR. Topologically, residues 788–966 are mitochondrial intermembrane; the sequence is TPEQHTRNET…AFIEALHKEK (179 aa). C862 and C880 are oxidised to a cystine. Residues 901–966 are a coiled coil; it reads RQQLTNTEVR…AFIEALHKEK (66 aa).

The protein belongs to the TRAFAC class dynamin-like GTPase superfamily. Dynamin/Fzo/YdjA family. In terms of assembly, oligomeric complex consisting of membrane-bound and soluble forms of OPA1. Post-translationally, cleaved by OMA1 or YME1L downstream of the transmembrane region in response to different signals to generate soluble forms. Cleaved by OMA1 at position S1 following stress conditions, generating the short soluble form (Dynamin-like GTPase OPA1, short form; S-OPA1).

Its subcellular location is the mitochondrion inner membrane. It localises to the mitochondrion intermembrane space. It carries out the reaction GTP + H2O = GDP + phosphate + H(+). In terms of biological role, dynamin-related GTPase that is essential for normal mitochondrial morphology by mediating fusion of the mitochondrial inner membranes, regulating cristae morphology and maintaining respiratory chain function. Exists in two forms: the transmembrane, long form (Dynamin-like GTPase OPA1, long form; L-OPA1), which is tethered to the inner mitochondrial membrane, and the short soluble form (Dynamin-like GTPase OPA1, short form; S-OPA1), which results from proteolytic cleavage and localizes in the intermembrane space. Both forms (L-OPA1 and S-OPA1) cooperate to catalyze the fusion of the mitochondrial inner membrane. The equilibrium between L-OPA1 and S-OPA1 is essential: excess levels of S-OPA1, produced by cleavage by OMA1 following loss of mitochondrial membrane potential, lead to an impaired equilibrium between L-OPA1 and S-OPA1, inhibiting mitochondrial fusion. The balance between L-OPA1 and S-OPA1 also influences cristae shape and morphology. Its role in mitochondrial morphology is required for mitochondrial genome maintenance. Functionally, constitutes the transmembrane long form (L-OPA1) that plays a central role in mitochondrial inner membrane fusion and cristae morphology. L-OPA1 and the soluble short form (S-OPA1) form higher-order helical assemblies that coordinate the fusion of mitochondrial inner membranes. Inner membrane-anchored L-OPA1 molecules initiate membrane remodeling by recruiting soluble S-OPA1 to rapidly polymerize into a flexible cylindrical scaffold encaging the mitochondrial inner membrane. Once at the membrane surface, the formation of S-OPA1 helices induce bilayer curvature. OPA1 dimerization through the paddle region, which inserts into cardiolipin-containing membrane, promotes GTP hydrolysis and the helical assembly of a flexible OPA1 lattice on the membrane, which drives membrane curvature and mitochondrial fusion. Plays a role in the maintenance and remodeling of mitochondrial cristae, some invaginations of the mitochondrial inner membrane that provide an increase in the surface area. Probably acts by forming helical filaments at the inside of inner membrane tubes with the shape and dimensions of crista junctions. Constitutes the soluble short form (S-OPA1) generated by cleavage by OMA1, which plays a central role in mitochondrial inner membrane fusion and cristae morphology. The transmembrane long form (L-OPA1) and the S-OPA1 form higher-order helical assemblies that coordinate the fusion of mitochondrial inner membranes. Inner membrane-anchored L-OPA1 molecules initiate membrane remodeling by recruiting soluble S-OPA1 to rapidly polymerize into a flexible cylindrical scaffold encaging the mitochondrial inner membrane. Once at the membrane surface, the formation of S-OPA1 helices induce bilayer curvature. OPA1 dimerization through the paddle region, which inserts into cardiolipin-containing membrane, promotes GTP hydrolysis and the helical assembly of a flexible OPA1 lattice on the membrane, which drives membrane curvature and mitochondrial fusion. Excess levels of S-OPA1 produced by cleavage by OMA1 following stress conditions that induce loss of mitochondrial membrane potential, lead to an impaired equilibrium between L-OPA1 and S-OPA1, thereby inhibiting mitochondrial fusion. Plays a role in the maintenance and remodeling of mitochondrial cristae, some invaginations of the mitochondrial inner membrane that provide an increase in the surface area. Probably acts by forming helical filaments at the inside of inner membrane tubes with the shape and dimensions of crista junctions. The protein is Dynamin-like GTPase OPA1, mitochondrial of Danio rerio (Zebrafish).